We begin with the raw amino-acid sequence, 1041 residues long: Sodium/potassium-transporting ATPase subunit alpha (1041 aa).

A run of 4 helical transmembrane segments spans residues 115 to 135, 147 to 167, 312 to 332, and 338 to 358; these read FGGF…AYSI, NLYL…FSYY, LITG…FILG, and AVIF…LATV. The active-site 4-aspartylphosphate intermediate is the D394. Position 526 (K526) interacts with ATP. A run of 4 helical transmembrane segments spans residues 808–828, 870–890, 935–955, and 970–990; these read FLAF…ILCI, MAYG…YFVI, TCHT…LIIC, and WALN…SYCP.

Belongs to the cation transport ATPase (P-type) (TC 3.A.3) family. Type IIC subfamily. In terms of assembly, the sodium/potassium-transporting ATPase is composed of a catalytic alpha subunit, an auxiliary non-catalytic beta subunit and an additional regulatory subunit. As to expression, high levels are found in some adult tissues: Malpighian tubules, indirect flight muscles, tubular leg muscles and throughout the nervous system (brain, optic lobes, retina and ventral thoracic neuromere). Lower levels are detected at the posterior end where the reproductive organs and rectum are located.

Its subcellular location is the cell membrane. The enzyme catalyses K(+)(out) + Na(+)(in) + ATP + H2O = K(+)(in) + Na(+)(out) + ADP + phosphate + H(+). Functionally, this is the catalytic component of the active enzyme, which catalyzes the hydrolysis of ATP coupled with the exchange of sodium and potassium ions across the plasma membrane. This action creates the electrochemical gradient of sodium and potassium ions, providing the energy for active transport of various nutrients. In Drosophila melanogaster (Fruit fly), this protein is Sodium/potassium-transporting ATPase subunit alpha (Atpalpha).